The chain runs to 629 residues: 1-deoxy-D-xylulose-5-phosphate synthase (629 aa).

Residues His72 and 113–115 (GHA) contribute to the thiamine diphosphate site. Position 144 (Asp144) interacts with Mg(2+). Residues 145 to 146 (GA), Asn174, Tyr287, and Glu370 each bind thiamine diphosphate. A Mg(2+)-binding site is contributed by Asn174.

The protein belongs to the transketolase family. DXPS subfamily. Homodimer. Mg(2+) is required as a cofactor. Requires thiamine diphosphate as cofactor.

The enzyme catalyses D-glyceraldehyde 3-phosphate + pyruvate + H(+) = 1-deoxy-D-xylulose 5-phosphate + CO2. It functions in the pathway metabolic intermediate biosynthesis; 1-deoxy-D-xylulose 5-phosphate biosynthesis; 1-deoxy-D-xylulose 5-phosphate from D-glyceraldehyde 3-phosphate and pyruvate: step 1/1. Its function is as follows. Catalyzes the acyloin condensation reaction between C atoms 2 and 3 of pyruvate and glyceraldehyde 3-phosphate to yield 1-deoxy-D-xylulose-5-phosphate (DXP). The chain is 1-deoxy-D-xylulose-5-phosphate synthase from Prochlorococcus marinus (strain MIT 9301).